A 63-amino-acid chain; its full sequence is Mu-like prophage FluMu protein gp38 (63 aa).

It to phage Mu protein gp38.

This is Mu-like prophage FluMu protein gp38 from Haemophilus influenzae (strain ATCC 51907 / DSM 11121 / KW20 / Rd).